The following is a 356-amino-acid chain: Tyrosine recombinase XerS (356 aa).

One can recognise a Core-binding (CB) domain in the interval 16–121; that stretch reads IMPWFVLDYY…ALSSLYKYLT (106 aa). The Tyr recombinase domain occupies 169–354; that stretch reads EFLDYVDCEY…VNDEQKNALD (186 aa). Residues R210, K234, H306, R309, and H332 contribute to the active site. Y341 acts as the O-(3'-phospho-DNA)-tyrosine intermediate in catalysis.

Belongs to the 'phage' integrase family. XerS subfamily.

It localises to the cytoplasm. Its activity is regulated as follows. FtsK is required for recombination. In terms of biological role, site-specific tyrosine recombinase, which acts by catalyzing the cutting and rejoining of the recombining DNA molecules. Essential to convert dimers of the bacterial chromosome into monomers to permit their segregation at cell division. The protein is Tyrosine recombinase XerS of Streptococcus uberis (strain ATCC BAA-854 / 0140J).